We begin with the raw amino-acid sequence, 116 residues long: Staphylococcal complement inhibitor (116 aa).

A signal peptide spans M1 to A31. Residues L62–G79 are essential for activity.

Belongs to the SCIN family.

It localises to the secreted. In terms of biological role, involved in countering the first line of host defense mechanisms. Efficiently inhibits opsonization, phagocytosis and killing of S.aureus by human neutrophils. Acts by binding and stabilizing human C3 convertases (C4b2a and C3bBb), leading to their inactivation. The convertases are no longer able to cleave complement C3, therefore preventing further C3b deposition on the bacterial surface and phagocytosis of the bacterium. Also prevents C5a-induced neutrophil responses. This chain is Staphylococcal complement inhibitor (scn), found in Staphylococcus aureus (strain Mu50 / ATCC 700699).